Here is a 4545-residue protein sequence, read N- to C-terminus: Prolow-density lipoprotein receptor-related protein 1 (4545 aa).

Residues 1-19 (MLTPPLLLLLPLLSALVAG) form the signal peptide. Topologically, residues 20 to 4424 (ATMDAPKTCS…SQQQPGHMTS (4405 aa)) are extracellular. 2 LDL-receptor class A domains span residues 27–66 (TCSP…EICP) and 72–110 (RCPP…AHCR). Intrachain disulfides connect cysteine 28–cysteine 41, cysteine 35–cysteine 54, cysteine 48–cysteine 65, cysteine 73–cysteine 86, cysteine 80–cysteine 99, and cysteine 93–cysteine 109. N-linked (GlcNAc...) asparagine glycans are attached at residues asparagine 115, asparagine 137, asparagine 186, asparagine 240, and asparagine 275. 3 LDL-receptor class B repeats span residues 293–335 (GNFY…DPAM), 336–379 (GKVF…DLVS), and 380–423 (RLVY…FENY). An N-linked (GlcNAc...) asparagine glycan is attached at asparagine 358. The N-linked (GlcNAc...) asparagine glycan is linked to asparagine 447. LDL-receptor class B repeat units follow at residues 572–614 (GFIY…DWMG), 615–660 (DNLY…DPLN), 661–711 (GWMY…DIPA), and 712–755 (GRLY…HGNY). An HAT 1 repeat occupies 639 to 671 (TRKTLIEGKMTHPRAIVVDPLNGWMYWTDWEED). Asparagine 730 carries N-linked (GlcNAc...) asparagine glycosylation. LDL-receptor class A domains follow at residues 854 to 892 (QCQP…ALCH), 895 to 933 (TCPS…ATCS), 936 to 973 (TCPP…ASCA), 976 to 1013 (TCFP…AGCS), 1015 to 1053 (SCSS…ANCT), 1062 to 1099 (GCHS…KGCE), 1104 to 1142 (VCDP…ENCE), and 1145 to 1184 (ACRP…ELCD). 24 disulfides stabilise this stretch: cysteine 855/cysteine 867, cysteine 862/cysteine 880, cysteine 874/cysteine 891, cysteine 896/cysteine 908, cysteine 903/cysteine 921, cysteine 915/cysteine 932, cysteine 937/cysteine 949, cysteine 944/cysteine 962, cysteine 956/cysteine 972, cysteine 977/cysteine 990, cysteine 985/cysteine 1003, cysteine 997/cysteine 1012, cysteine 1016/cysteine 1028, cysteine 1023/cysteine 1041, cysteine 1035/cysteine 1052, cysteine 1063/cysteine 1076, cysteine 1070/cysteine 1089, cysteine 1083/cysteine 1098, cysteine 1105/cysteine 1119, cysteine 1113/cysteine 1132, cysteine 1126/cysteine 1141, cysteine 1146/cysteine 1160, cysteine 1153/cysteine 1173, and cysteine 1167/cysteine 1183. Ca(2+)-binding residues include tryptophan 872, aspartate 875, aspartate 877, aspartate 879, aspartate 885, and glutamate 886. An N-linked (GlcNAc...) asparagine glycan is attached at asparagine 929. Residues tryptophan 1033, aspartate 1036, aspartate 1038, aspartate 1040, aspartate 1046, and glutamate 1047 each coordinate Ca(2+). A glycan (N-linked (GlcNAc...) asparagine) is linked at asparagine 1051. Positions 1081, 1084, 1086, 1088, 1094, and 1095 each coordinate Ca(2+). N-linked (GlcNAc...) asparagine glycosylation occurs at asparagine 1156. N-linked (GlcNAc...) asparagine glycosylation is found at asparagine 1196 and asparagine 1219. LDL-receptor class B repeat units follow at residues 1310–1356 (SALY…DWIA), 1357–1399 (GNIY…DPRD), 1400–1446 (GILF…DYLE), 1447–1491 (KRIL…YGGE), and 1492–1532 (VYWT…YHPS). HAT repeat units follow at residues 1380–1413 (TTLL…SLPR) and 1470–1503 (MEVL…NTLA). N-linked (GlcNAc...) asparagine glycans are attached at residues asparagine 1512, asparagine 1559, asparagine 1576, asparagine 1617, and asparagine 1646. 4 LDL-receptor class B repeats span residues 1628 to 1670 (QRVY…DWVS), 1671 to 1714 (RNLF…HPLR), 1715 to 1754 (GKLY…DFPE), and 1755 to 1799 (SKLY…MGDK). One copy of the HAT 4 repeat lies at 1653 to 1684 (VVSADLPNAHGLAVDWVSRNLFWTSYDTNKKQ). Asparagine 1724, asparagine 1734, asparagine 1764, asparagine 1826, and asparagine 1934 each carry an N-linked (GlcNAc...) asparagine glycan. LDL-receptor class B repeat units lie at residues 1935-1977 (DTIY…DWIA), 1978-2020 (GNIY…HPEK), 2021-2064 (GYLF…DYQG), and 2065-2108 (GKLY…FEDF). The N-linked (GlcNAc...) asparagine glycan is linked to asparagine 1996. The residue at position 2010 (lysine 2010) is an N6-acetyllysine. A glycan (N-linked (GlcNAc...) asparagine) is linked at asparagine 2049. Asparagine 2118 and asparagine 2128 each carry an N-linked (GlcNAc...) asparagine glycan. LDL-receptor class B repeat units lie at residues 2254–2295 (NRIF…HRGW), 2296–2344 (DTLY…DECQ), 2345–2389 (NLMF…DHRA), 2390–2432 (EKLY…YGEH), and 2433–2474 (IFWT…VAND). HAT repeat units lie at residues 2277-2309 (TTIV…STIT), 2325-2358 (TVIT…LHPS), and 2411-2444 (HRYV…RAVQ). Asparagine 2473, asparagine 2503, and asparagine 2522 each carry an N-linked (GlcNAc...) asparagine glycan. 7 LDL-receptor class A domains span residues 2524 to 2563 (SCRA…SYCN), 2566 to 2602 (RCKK…IPCN), 2605 to 2641 (ACGV…MNCS), 2639 to 2690 (NCSA…RDCP), 2696 to 2732 (RCPL…THCN), 2734 to 2771 (FCSE…AHCE), and 2774 to 2814 (TCGP…AGCL). Cystine bridges form between cysteine 2525/cysteine 2538, cysteine 2533/cysteine 2551, cysteine 2545/cysteine 2562, cysteine 2567/cysteine 2579, cysteine 2574/cysteine 2592, and cysteine 2586/cysteine 2601. N-linked (GlcNAc...) asparagine glycosylation occurs at asparagine 2602. Cystine bridges form between cysteine 2606-cysteine 2618, cysteine 2613-cysteine 2631, cysteine 2625-cysteine 2640, cysteine 2640-cysteine 2667, cysteine 2645-cysteine 2680, cysteine 2674-cysteine 2689, cysteine 2697-cysteine 2709, cysteine 2704-cysteine 2722, cysteine 2716-cysteine 2731, cysteine 2735-cysteine 2747, cysteine 2742-cysteine 2760, cysteine 2754-cysteine 2770, cysteine 2775-cysteine 2788, cysteine 2782-cysteine 2801, and cysteine 2795-cysteine 2813. Residues asparagine 2621 and asparagine 2639 are each glycosylated (N-linked (GlcNAc...) asparagine). N-linked (GlcNAc...) asparagine glycosylation is present at asparagine 2816. LDL-receptor class A domains are found at residues 2818 to 2855 (TCDD…PECE), 2858 to 2899 (TCGP…PHCT), and 2904 to 2941 (KCNA…RGCH). Cystine bridges form between cysteine 2819–cysteine 2831, cysteine 2826–cysteine 2844, cysteine 2838–cysteine 2854, cysteine 2859–cysteine 2871, cysteine 2866–cysteine 2885, cysteine 2879–cysteine 2898, cysteine 2905–cysteine 2918, cysteine 2913–cysteine 2931, cysteine 2925–cysteine 2940, cysteine 2987–cysteine 2997, and cysteine 2993–cysteine 3006. N-linked (GlcNAc...) asparagine glycosylation occurs at asparagine 2906. The 36-residue stretch at 2983–3018 (DVDECSTTFPCSQLCINTHGSYKCLCVEGYAPRGGD) folds into the EGF-like 1; calcium-binding domain. Residues asparagine 3049 and asparagine 3090 are each glycosylated (N-linked (GlcNAc...) asparagine). LDL-receptor class B repeat units follow at residues 3070 to 3114 (QMIY…DWVG), 3115 to 3157 (GNLY…DVQN), 3158 to 3201 (GYLY…DYVT), 3202 to 3244 (ERIY…FEDY), and 3245 to 3285 (VYWT…FHAL). HAT repeat units lie at residues 3128 to 3171 (EVSK…HSLI) and 3224 to 3256 (RHVV…KSIN). Residues asparagine 3265 and asparagine 3334 are each glycosylated (N-linked (GlcNAc...) asparagine). 11 consecutive LDL-receptor class A domains span residues 3334–3371 (NCTA…PDCP), 3374–3410 (KCRP…ANCD), 3413–3450 (VCLP…RDCP), 3453–3491 (TCAP…ANCT), 3494–3533 (TCGV…EECD), 3536–3572 (TCEP…ESCT), 3575–3611 (PCSE…KDCT), 3613–3649 (RCDM…EACG), 3654–3692 (TCPL…EECT), 3695–3733 (QCPP…EDCE), and 3741–3778 (HCKD…EDCS). 33 cysteine pairs are disulfide-bonded: cysteine 3335–cysteine 3347, cysteine 3342–cysteine 3360, cysteine 3354–cysteine 3370, cysteine 3375–cysteine 3387, cysteine 3382–cysteine 3400, cysteine 3394–cysteine 3409, cysteine 3414–cysteine 3427, cysteine 3421–cysteine 3440, cysteine 3434–cysteine 3449, cysteine 3454–cysteine 3467, cysteine 3461–cysteine 3480, cysteine 3474–cysteine 3490, cysteine 3495–cysteine 3508, cysteine 3502–cysteine 3521, cysteine 3515–cysteine 3532, cysteine 3537–cysteine 3549, cysteine 3544–cysteine 3562, cysteine 3556–cysteine 3571, cysteine 3576–cysteine 3588, cysteine 3583–cysteine 3601, cysteine 3595–cysteine 3610, cysteine 3614–cysteine 3626, cysteine 3621–cysteine 3639, cysteine 3633–cysteine 3648, cysteine 3655–cysteine 3667, cysteine 3662–cysteine 3680, cysteine 3674–cysteine 3691, cysteine 3696–cysteine 3710, cysteine 3704–cysteine 3723, cysteine 3717–cysteine 3732, cysteine 3742–cysteine 3755, cysteine 3750–cysteine 3768, and cysteine 3762–cysteine 3777. The N-linked (GlcNAc...) asparagine glycan is linked to asparagine 3489. A glycan (N-linked (GlcNAc...) asparagine) is linked at asparagine 3663. N-linked (GlcNAc...) asparagine glycosylation is found at asparagine 3789 and asparagine 3840. One copy of the LDL-receptor class B 31 repeat lies at 3913–3925 (GRVYWTNWHTGTI). Asparagine 3954 carries an N-linked (GlcNAc...) asparagine glycan. LDL-receptor class B repeat units follow at residues 3971–4013 (GNVY…DPLR), 4014–4057 (GTMY…DYHN), and 4058–4102 (ERLY…FEDY). The stretch at 3995 to 4027 (TLISGMIDEPHAIVVDPLRGTMYWSDWGNHPKI) is one HAT 10 repeat. Residues asparagine 4076, asparagine 4126, and asparagine 4180 are each glycosylated (N-linked (GlcNAc...) asparagine). EGF-like domains follow at residues 4197-4230 (RPGT…YTGD), 4233-4269 (ELDQ…PRCT), 4270-4302 (QQVC…FLGD), and 4305-4341 (QYRQ…TRCE). Cystine bridges form between cysteine 4201–cysteine 4211, cysteine 4205–cysteine 4221, cysteine 4237–cysteine 4247, cysteine 4241–cysteine 4257, cysteine 4259–cysteine 4268, cysteine 4273–cysteine 4283, cysteine 4277–cysteine 4293, cysteine 4309–cysteine 4319, cysteine 4313–cysteine 4329, and cysteine 4331–cysteine 4340. N-linked (GlcNAc...) asparagine glycosylation occurs at asparagine 4280. Residue asparagine 4365 is glycosylated (N-linked (GlcNAc...) asparagine). The region spanning 4376 to 4410 (LTCIDHCSNGGSCTMNSKMMPECQCPPHMTGPRCE) is the EGF-like 6 domain. 3 disulfide bridges follow: cysteine 4378–cysteine 4388, cysteine 4382–cysteine 4398, and cysteine 4400–cysteine 4409. Residues 4425 to 4445 (ILIPLLLLLLLLLVAGVVFWY) form a helical membrane-spanning segment. Over 4446 to 4545 (KRRVRGAKGF…PEDEIGDPLA (100 aa)) the chain is Cytoplasmic. Residues 4446 to 4545 (KRRVRGAKGF…PEDEIGDPLA (100 aa)) form an interaction with MAFB region. Threonine 4461 is modified (phosphothreonine). The residue at position 4508 (tyrosine 4508) is a Phosphotyrosine. Residues serine 4518, serine 4521, and serine 4524 each carry the phosphoserine modification.

Belongs to the LDLR family. As to quaternary structure, heterodimer of an 85-kDa membrane-bound carboxyl subunit and a non-covalently attached 515-kDa N-terminal subunit. Intracellular domain interacts with MAFB. Found in a complex with PID1/PCLI1, LRP1 and CUBNI. Interacts with SNX17, PID1/PCLI1, PDGF and CUBN. The intracellular domain interacts with SHC1, GULP1 and DAB1. Can weakly interact (via NPXY motif) with DAB2 (via PID domain); the interaction is enhanced by tyrosine phosphorylation of the NPXY motif. Interacts with MDK; promotes neuronal survival. Interacts with LRPAP1; this interaction is followed by rapid internalization. Interacts with uPA/PLAU and PAI1/SERPINE1, either individually or in complex with each other, leading to rapid endocytosis; this interaction is abolished in the presence of LRPAP1/RAP. Also interacts with tPA/PLAT alone or in complex with SERPINE1. Interacts with the urokinase receptor PLAUR; this interaction leads to PLAUR internalization and is impaired in the presence of SORL1. Interacts with PDGFB. Interacts with TAU/MAPT, leading to endocytosis; this interaction is reduced in the presence of LRPAP1/RAP. Interacts with IGFBP3. Interacts with ADGRG6. In terms of processing, cleaved into a 85 kDa membrane-spanning subunit (LRP-85) and a 515 kDa large extracellular domain (LRP-515) that remains non-covalently associated. Gamma-secretase-dependent cleavage of LRP-85 releases the intracellular domain from the membrane. Phosphorylated on serine and threonine residues. Post-translationally, phosphorylated on tyrosine residues upon stimulation with PDGF. Tyrosine phosphorylation promotes interaction with SHC1.

Its subcellular location is the cell membrane. The protein localises to the membrane. The protein resides in the coated pit. It is found in the golgi outpost. It localises to the cytoplasm. Its subcellular location is the cytoskeleton. The protein localises to the microtubule organizing center. The protein resides in the nucleus. Endocytic receptor involved in endocytosis and in phagocytosis of apoptotic cells. Required for early embryonic development. Involved in cellular lipid homeostasis. Involved in the plasma clearance of chylomicron remnants and activated LRPAP1 (alpha 2-macroglobulin), as well as the local metabolism of complexes between plasminogen activators and their endogenous inhibitors. Acts as an LRPAP1 alpha-2-macroglobulin receptor. Acts as a TAU/MAPT receptor and controls the endocytosis of TAU/MAPT as well as its subsequent spread. May modulate cellular events, such as APP metabolism, kinase-dependent intracellular signaling, neuronal calcium signaling as well as neurotransmission. Also acts as a receptor for IGFBP3 to mediate cell growth inhibition. The chain is Prolow-density lipoprotein receptor-related protein 1 from Rattus norvegicus (Rat).